Reading from the N-terminus, the 342-residue chain is tRNA N6-adenosine threonylcarbamoyltransferase (342 aa).

2 residues coordinate Fe cation: His-114 and His-118. Residues 136 to 140 (LVSGG), Asp-169, Gly-182, Asp-186, and Asn-275 each bind substrate. Asp-301 lines the Fe cation pocket.

The protein belongs to the KAE1 / TsaD family. Requires Fe(2+) as cofactor.

It localises to the cytoplasm. It catalyses the reaction L-threonylcarbamoyladenylate + adenosine(37) in tRNA = N(6)-L-threonylcarbamoyladenosine(37) in tRNA + AMP + H(+). Functionally, required for the formation of a threonylcarbamoyl group on adenosine at position 37 (t(6)A37) in tRNAs that read codons beginning with adenine. Is involved in the transfer of the threonylcarbamoyl moiety of threonylcarbamoyl-AMP (TC-AMP) to the N6 group of A37, together with TsaE and TsaB. TsaD likely plays a direct catalytic role in this reaction. The sequence is that of tRNA N6-adenosine threonylcarbamoyltransferase from Streptococcus pyogenes serotype M4 (strain MGAS10750).